The following is a 207-amino-acid chain: Holliday junction branch migration complex subunit RuvA (207 aa).

The tract at residues Met1–Asn64 is domain I. Residues Thr65 to Pro143 are domain II. The tract at residues Ala144 to Thr158 is flexible linker. The tract at residues Ser159–Ile207 is domain III.

The protein belongs to the RuvA family. As to quaternary structure, homotetramer. Forms an RuvA(8)-RuvB(12)-Holliday junction (HJ) complex. HJ DNA is sandwiched between 2 RuvA tetramers; dsDNA enters through RuvA and exits via RuvB. An RuvB hexamer assembles on each DNA strand where it exits the tetramer. Each RuvB hexamer is contacted by two RuvA subunits (via domain III) on 2 adjacent RuvB subunits; this complex drives branch migration. In the full resolvosome a probable DNA-RuvA(4)-RuvB(12)-RuvC(2) complex forms which resolves the HJ.

The protein resides in the cytoplasm. In terms of biological role, the RuvA-RuvB-RuvC complex processes Holliday junction (HJ) DNA during genetic recombination and DNA repair, while the RuvA-RuvB complex plays an important role in the rescue of blocked DNA replication forks via replication fork reversal (RFR). RuvA specifically binds to HJ cruciform DNA, conferring on it an open structure. The RuvB hexamer acts as an ATP-dependent pump, pulling dsDNA into and through the RuvAB complex. HJ branch migration allows RuvC to scan DNA until it finds its consensus sequence, where it cleaves and resolves the cruciform DNA. This is Holliday junction branch migration complex subunit RuvA from Aliivibrio fischeri (strain MJ11) (Vibrio fischeri).